The following is a 193-amino-acid chain: Adenine phosphoribosyltransferase (193 aa).

The protein belongs to the purine/pyrimidine phosphoribosyltransferase family. As to quaternary structure, homodimer.

The protein resides in the cytoplasm. The enzyme catalyses AMP + diphosphate = 5-phospho-alpha-D-ribose 1-diphosphate + adenine. The protein operates within purine metabolism; AMP biosynthesis via salvage pathway; AMP from adenine: step 1/1. Functionally, catalyzes a salvage reaction resulting in the formation of AMP, that is energically less costly than de novo synthesis. The chain is Adenine phosphoribosyltransferase from Bifidobacterium adolescentis (strain ATCC 15703 / DSM 20083 / NCTC 11814 / E194a).